The primary structure comprises 309 residues: Foldase protein PrsA (309 aa).

An N-terminal signal peptide occupies residues 1–22 (MKTRSKLAAGFLTLMSVATLAA). Residue cysteine 23 is the site of N-palmitoyl cysteine attachment. A lipid anchor (S-diacylglycerol cysteine) is attached at cysteine 23. Residues 146–241 (TPETSVQVIK…TSYYIIKVTD (96 aa)) form the PpiC domain.

It belongs to the PrsA family.

It localises to the cell membrane. The enzyme catalyses [protein]-peptidylproline (omega=180) = [protein]-peptidylproline (omega=0). In terms of biological role, plays a major role in protein secretion by helping the post-translocational extracellular folding of several secreted proteins. This Streptococcus agalactiae serotype Ia (strain ATCC 27591 / A909 / CDC SS700) protein is Foldase protein PrsA.